A 468-amino-acid polypeptide reads, in one-letter code: Neuronal acetylcholine receptor subunit alpha-5 (468 aa).

The signal sequence occupies residues 1 to 22; the sequence is MATRGSGPRAPRLLLLVQLVAG. Residues 23-254 lie on the Extracellular side of the membrane; that stretch reads RCGLAGAAGG…VIKRLPLFYT (232 aa). N-linked (GlcNAc...) asparagine glycans are attached at residues N155, N183, and N229. C170 and C184 are joined by a disulfide. A disulfide bridge connects residues C234 and C235. 3 helical membrane passes run 255 to 275, 282 to 302, and 317 to 337; these read LFLI…FYLP, ICLC…IEEI, and LVFT…AINI. The Cytoplasmic portion of the chain corresponds to 338 to 429; sequence HHRSSSTHNA…WKFIAQVLDR (92 aa). Residues 430–451 traverse the membrane as a helical segment; sequence MFLWTFLFVSIVGSLGLFVPVI. At 452–468 the chain is on the extracellular side; the sequence is YKWANILIPVHIGNANK.

Belongs to the ligand-gated ion channel (TC 1.A.9) family. Acetylcholine receptor (TC 1.A.9.1) subfamily. Alpha-5/CHRNA5 sub-subfamily. In terms of assembly, neuronal AChR that forms heteropentamers composed of two different type of subunits: alpha and non-alpha (beta). CHRNA5/alpha-5 subunit is only able to form functional nAChRs when co-assembled with another alpha subunit, can be combined to CHRNA4/alpha-4 or CHRNA3/alpha-3 and CHRNB4/beta-4 or CHRNB2/beta-2 to give rise to functional receptors. Interacts with LYPD6.

It is found in the synaptic cell membrane. The protein resides in the cell membrane. The catalysed reaction is Ca(2+)(in) = Ca(2+)(out). It catalyses the reaction K(+)(in) = K(+)(out). It carries out the reaction Na(+)(in) = Na(+)(out). With respect to regulation, activated by a myriad of ligands such as acetylcholine, cytisine, nicotine, choline and epibatidine. Its function is as follows. Component of neuronal acetylcholine receptors (nAChRs) that function as pentameric, ligand-gated cation channels with high calcium permeability among other activities. nAChRs are excitatory neurotrasnmitter receptors formed by a collection of nAChR subunits known to mediate synaptic transmission in the nervous system and the neuromuscular junction. Each nAchR subunit confers differential attributes to channel properties, including activation, deactivation and desensitization kinetics, pH sensitivity, cation permeability, and binding to allosteric modulators. Has an accessory rather than functional role and is only able to form functional nAChRs when co-assembled with another beta subunit. Participates in pentameric assemblies along with CHRNA3, CHRNA4, CHRNB2 and CHRNB4. Increases receptor sensitivity to acetylcholine and nicotine when associated with CHRNA4 and CHRNB2. Plays a role in nicotine addiction. The chain is Neuronal acetylcholine receptor subunit alpha-5 (CHRNA5) from Pan troglodytes (Chimpanzee).